Consider the following 339-residue polypeptide: Sphingomyelinase D (339 aa).

A signal peptide spans 1 to 21 (MVSLLRLCSFLLAAGSILVQG). Residue H60 is part of the active site. E80, D82, and D128 together coordinate Mg(2+). An SMD-tail motif is present at residues 309-316 (ATVDDNPW). Positions 313 to 339 (DNPWSSMSKKGSSKSSWVKGEVPSIAH) are disordered. Residues 317–328 (SSMSKKGSSKSS) are compositionally biased toward low complexity.

Belongs to the sphingomyelinase D/phospholipase D family. The cofactor is Mg(2+).

It is found in the secreted. It catalyses the reaction a sphingomyelin + H2O = an N-acylsphing-4-enine 1-phosphate + choline + H(+). Catalyzes the hydrolysis of sphingomyelin. Sphingomyelinases D are produced by some spider in their venoms, but also by arthropods such as ticks, or pathogenic bacteria and fungi. They might play a role in pathogenicity through different mechanisms, such as membrane destabilization and host cell penetration, but also pulmonary inflammation and cutaneous lesions. The polypeptide is Sphingomyelinase D (Arthroderma benhamiae (strain ATCC MYA-4681 / CBS 112371) (Trichophyton mentagrophytes)).